The following is a 1363-amino-acid chain: Xanthine dehydrogenase (1363 aa).

One can recognise a 2Fe-2S ferredoxin-type domain in the interval 35–121 (DTIRFYLNGT…GKHVITVEGI (87 aa)). Residues cysteine 73, cysteine 78, cysteine 81, cysteine 103, cysteine 142, cysteine 145, cysteine 177, and cysteine 179 each coordinate [2Fe-2S] cluster. In terms of domain architecture, FAD-binding PCMH-type spans 266–450 (FGNKRKKWYR…SSLRIPTASE (185 aa)). FAD contacts are provided by residues 294–301 (LIGGSTET), phenylalanine 374, 384–388 (SPAGN), aspartate 397, and lysine 459. Mo-molybdopterin is bound by residues glutamine 798 and phenylalanine 829. Substrate-binding residues include glutamate 833 and arginine 911. Position 943 (arginine 943) interacts with Mo-molybdopterin. Phenylalanine 945 and threonine 1041 together coordinate substrate. Alanine 1110 lines the Mo-molybdopterin pocket. Residue glutamate 1295 is the Proton acceptor of the active site.

The protein belongs to the xanthine dehydrogenase family. FAD serves as cofactor. The cofactor is Mo-molybdopterin. [2Fe-2S] cluster is required as a cofactor.

The protein localises to the peroxisome. It catalyses the reaction xanthine + NAD(+) + H2O = urate + NADH + H(+). The enzyme catalyses hypoxanthine + NAD(+) + H2O = xanthine + NADH + H(+). In terms of biological role, key enzyme in purine degradation. Catalyzes the oxidation of hypoxanthine to xanthine. Catalyzes the oxidation of xanthine to uric acid. In Emericella nidulans (strain FGSC A4 / ATCC 38163 / CBS 112.46 / NRRL 194 / M139) (Aspergillus nidulans), this protein is Xanthine dehydrogenase (hxA).